The chain runs to 100 residues: MAKKSMIEREKKRQRLVIKYAQKRQQLKTELKTTSFLEQKVNLNRKLQQLPRNSFPVRLHNRCLITGRPKGYLRDFGLSRHVLREMAHECLLPGVTKSSW.

The protein belongs to the universal ribosomal protein uS14 family. Part of the 30S ribosomal subunit.

Its subcellular location is the plastid. It is found in the chloroplast. Binds 16S rRNA, required for the assembly of 30S particles. This chain is Small ribosomal subunit protein uS14c, found in Pleurastrum terricola (Filamentous green alga).